The chain runs to 66 residues: uncharacterized protein (66 aa).

The helical transmembrane segment at 11-31 threads the bilayer; it reads PFPLLGVWIIVIIIVAVIGLL.

Its subcellular location is the membrane. This is an uncharacterized protein from Chenopodium amaranticolor (Quinoa).